The chain runs to 600 residues: MLPSHKQTISQLLSDAVGTLLPEGTNRPEIVLERPKQAAHGDIACNVALQLAKPLGTNPRELANRIADGIRADARGQRLVSAVEIAGPGFINLRLSPTARTDVLAAVFAEGDRYGAADLHDGAPVLVEFVSANPTGPLHVGHGRQAALGDALAALLEWQGHKVHREFYYNDAGVQIHNLAVSVQARARGFKPGDTGWPEAAYNGDYIADIAADYLAGKTVRASDGEPVTGARDVENIEAIRRFAVTYLRNEQDIDLQAFGVKFDHYYLESSLYADGKVQQTVDALIAAGKTYEQEGALWLRTTDDGDDKDRVMRKSDGSYTYFVPDVAYHTTKWGRGFTQVINVQGSDHHGTIARVRAGLQGLDLGIPKGYPDYVLHKMVTVMKDGAEVKISKRAGSYVTVRDLIEWSNGDAESEAGVDTIRACVESGAPNWPGRFTRGRDAVRFFLLSRKADTEFVFDVDLALKQSDENPVYYVQYAHARICSVFEQWHAREGGDAASLAGADLAAVAGPEASPQAVALVQRIAAFPDMLADAARELAPHAVAFYLRDLAGDFHAFYNADRVLVDDDAVKRARLALLAATRQVLRNGLAVIGVSAPQKM.

Positions 132 to 142 match the 'HIGH' region motif; that stretch reads ANPTGPLHVGH.

It belongs to the class-I aminoacyl-tRNA synthetase family. As to quaternary structure, monomer.

The protein resides in the cytoplasm. The catalysed reaction is tRNA(Arg) + L-arginine + ATP = L-arginyl-tRNA(Arg) + AMP + diphosphate. This is Arginine--tRNA ligase from Ralstonia nicotianae (strain ATCC BAA-1114 / GMI1000) (Ralstonia solanacearum).